The sequence spans 68 residues: Neuronal regeneration-related protein (68 aa).

As to quaternary structure, interacts with FLNA. Interacts with the latency-associated peptides (LAP) of TGFB1 and TGFB2; the interaction results in a decrease in TGFB autoinduction. In terms of processing, phosphorylated on Ser-59. Phosphorylation decreases stability and activity.

It is found in the cytoplasm. Its function is as follows. May have roles in neural function. Ectopic expression promotes axonal regeneration. Also augments motility of gliomas. May also have roles in cellular differentiation. Induces differentiation of fibroblast into myofibroblast and myofibroblast ameboid migration. Increases retinoic-acid regulation of lipid-droplet biogenesis. Down-regulates the expression of TGFB1 and TGFB2 but not of TGFB3. May play a role in the regulation of alveolar generation. This chain is Neuronal regeneration-related protein (Nrep), found in Rattus norvegicus (Rat).